A 191-amino-acid polypeptide reads, in one-letter code: Transmembrane protein 17B (191 aa).

4 helical membrane-spanning segments follow: residues 50–70 (MSLY…VVML), 83–103 (FILI…LYLG), 115–135 (LAGF…FQLF), and 147–167 (GVHI…FVAL).

The protein belongs to the TMEM17 family. As to quaternary structure, part of the tectonic-like complex (also named B9 complex).

Its subcellular location is the cell projection. The protein localises to the cilium membrane. In terms of biological role, transmembrane component of the tectonic-like complex, a complex localized at the transition zone of primary cilia and acting as a barrier that prevents diffusion of transmembrane proteins between the cilia and plasma membranes. Required for ciliogenesis and sonic hedgehog/SHH signaling. The sequence is that of Transmembrane protein 17B (Tmem17b) from Danio rerio (Zebrafish).